A 467-amino-acid chain; its full sequence is Cysteine--tRNA ligase (467 aa).

Cysteine 30 lines the Zn(2+) pocket. The 'HIGH' region signature appears at 32–42; the sequence is PTVYNYIHIGN. Zn(2+) is bound by residues cysteine 210, histidine 235, and glutamate 239. The 'KMSKS' region motif lies at 267–271; that stretch reads KMSKS. Lysine 270 serves as a coordination point for ATP. A Phosphoserine modification is found at serine 271.

It belongs to the class-I aminoacyl-tRNA synthetase family. As to quaternary structure, monomer. It depends on Zn(2+) as a cofactor.

The protein localises to the cytoplasm. The catalysed reaction is tRNA(Cys) + L-cysteine + ATP = L-cysteinyl-tRNA(Cys) + AMP + diphosphate. This chain is Cysteine--tRNA ligase, found in Geobacillus thermodenitrificans (strain NG80-2).